The chain runs to 168 residues: NADH-quinone oxidoreductase subunit B (168 aa).

The [4Fe-4S] cluster site is built by Cys-37, Cys-38, Cys-103, and Cys-132.

This sequence belongs to the complex I 20 kDa subunit family. In terms of assembly, NDH-1 is composed of 14 different subunits. Subunits NuoB, C, D, E, F, and G constitute the peripheral sector of the complex. Requires [4Fe-4S] cluster as cofactor.

The protein resides in the cell inner membrane. It catalyses the reaction a quinone + NADH + 5 H(+)(in) = a quinol + NAD(+) + 4 H(+)(out). Its function is as follows. NDH-1 shuttles electrons from NADH, via FMN and iron-sulfur (Fe-S) centers, to quinones in the respiratory chain. The immediate electron acceptor for the enzyme in this species is believed to be ubiquinone. Couples the redox reaction to proton translocation (for every two electrons transferred, four hydrogen ions are translocated across the cytoplasmic membrane), and thus conserves the redox energy in a proton gradient. This is NADH-quinone oxidoreductase subunit B from Campylobacter fetus subsp. fetus (strain 82-40).